We begin with the raw amino-acid sequence, 273 residues long: ATP synthase subunit a (273 aa).

A run of 5 helical transmembrane segments spans residues 42 to 62 (TLNIDSLFFSVVLGALFLFIF), 102 to 122 (VIAPLALTVFVWVFLMNMMDL), 148 to 168 (DVSITLSMALGVFILILFYSI), 213 to 233 (LFGNMYAGELIFILIAGLLPW), and 244 to 264 (AIFHILIITLQAFIFMVLTIV).

The protein belongs to the ATPase A chain family. As to quaternary structure, F-type ATPases have 2 components, CF(1) - the catalytic core - and CF(0) - the membrane proton channel. CF(1) has five subunits: alpha(3), beta(3), gamma(1), delta(1), epsilon(1). CF(0) has three main subunits: a(1), b(2) and c(9-12). The alpha and beta chains form an alternating ring which encloses part of the gamma chain. CF(1) is attached to CF(0) by a central stalk formed by the gamma and epsilon chains, while a peripheral stalk is formed by the delta and b chains.

It localises to the cell inner membrane. Key component of the proton channel; it plays a direct role in the translocation of protons across the membrane. The polypeptide is ATP synthase subunit a (Serratia proteamaculans (strain 568)).